The sequence spans 85 residues: U4-theraphotoxin-Hhn1a (85 aa).

The signal sequence occupies residues 1–22; it reads MKVTLIAILTCAAVLVLHTTAA. Residues 23–48 constitute a propeptide that is removed on maturation; the sequence is EELEAESQPMEVGMPDTELAAVDEER. Cystine bridges form between C52/C66, C56/C77, and C71/C82.

It belongs to the neurotoxin 12 (Hwtx-2) family. 02 (Hwtx-2) subfamily. In terms of assembly, monomer. As to expression, expressed by the venom gland.

Its subcellular location is the secreted. Its function is as follows. Neurotoxin active on both insects and mammals. This is U4-theraphotoxin-Hhn1a from Cyriopagopus hainanus (Chinese bird spider).